The sequence spans 227 residues: 2,3-bisphosphoglycerate-dependent phosphoglycerate mutase (227 aa).

Substrate contacts are provided by residues 7–14 (RHGLSEWN), 20–21 (TG), Arg59, 86–89 (ERHY), Lys97, 113–114 (RR), and 182–183 (GN). His8 (tele-phosphohistidine intermediate) is an active-site residue. Glu86 (proton donor/acceptor) is an active-site residue.

It belongs to the phosphoglycerate mutase family. BPG-dependent PGAM subfamily. Homodimer.

It carries out the reaction (2R)-2-phosphoglycerate = (2R)-3-phosphoglycerate. Its pathway is carbohydrate degradation; glycolysis; pyruvate from D-glyceraldehyde 3-phosphate: step 3/5. Functionally, catalyzes the interconversion of 2-phosphoglycerate and 3-phosphoglycerate. This is 2,3-bisphosphoglycerate-dependent phosphoglycerate mutase from Actinobacillus succinogenes (strain ATCC 55618 / DSM 22257 / CCUG 43843 / 130Z).